Here is a 381-residue protein sequence, read N- to C-terminus: Spermidine/putrescine import ATP-binding protein PotA (381 aa).

The 231-residue stretch at 19–249 folds into the ABC transporter domain; the sequence is VELRKVFKVF…PESPFVADFI (231 aa). 51 to 58 is a binding site for ATP; sequence GPSGCGKT.

This sequence belongs to the ABC transporter superfamily. Spermidine/putrescine importer (TC 3.A.1.11.1) family. As to quaternary structure, the complex is composed of two ATP-binding proteins (PotA), two transmembrane proteins (PotB and PotC) and a solute-binding protein (PotD).

It localises to the cell inner membrane. The catalysed reaction is ATP + H2O + polyamine-[polyamine-binding protein]Side 1 = ADP + phosphate + polyamineSide 2 + [polyamine-binding protein]Side 1.. In terms of biological role, part of the ABC transporter complex PotABCD involved in spermidine/putrescine import. Responsible for energy coupling to the transport system. This Trichodesmium erythraeum (strain IMS101) protein is Spermidine/putrescine import ATP-binding protein PotA.